Here is a 1190-residue protein sequence, read N- to C-terminus: DNA-directed RNA polymerase subunit beta (1190 aa).

This sequence belongs to the RNA polymerase beta chain family. In terms of assembly, the RNAP catalytic core consists of 2 alpha, 1 beta, 1 beta' and 1 omega subunit. When a sigma factor is associated with the core the holoenzyme is formed, which can initiate transcription.

It carries out the reaction RNA(n) + a ribonucleoside 5'-triphosphate = RNA(n+1) + diphosphate. Its function is as follows. DNA-dependent RNA polymerase catalyzes the transcription of DNA into RNA using the four ribonucleoside triphosphates as substrates. The polypeptide is DNA-directed RNA polymerase subunit beta (Geobacillus thermodenitrificans (strain NG80-2)).